The following is a 126-amino-acid chain: Aspartate 1-decarboxylase (126 aa).

Ser25 functions as the Schiff-base intermediate with substrate; via pyruvic acid in the catalytic mechanism. Ser25 bears the Pyruvic acid (Ser) mark. Substrate is bound at residue Thr57. Tyr58 functions as the Proton donor in the catalytic mechanism. 73–75 (GAA) contributes to the substrate binding site.

This sequence belongs to the PanD family. As to quaternary structure, heterooctamer of four alpha and four beta subunits. Pyruvate is required as a cofactor. In terms of processing, is synthesized initially as an inactive proenzyme, which is activated by self-cleavage at a specific serine bond to produce a beta-subunit with a hydroxyl group at its C-terminus and an alpha-subunit with a pyruvoyl group at its N-terminus.

It localises to the cytoplasm. The catalysed reaction is L-aspartate + H(+) = beta-alanine + CO2. The protein operates within cofactor biosynthesis; (R)-pantothenate biosynthesis; beta-alanine from L-aspartate: step 1/1. In terms of biological role, catalyzes the pyruvoyl-dependent decarboxylation of aspartate to produce beta-alanine. This is Aspartate 1-decarboxylase from Serratia proteamaculans (strain 568).